The chain runs to 860 residues: Leucine--tRNA ligase (860 aa).

Residues 42–52 (PYPSGRLHMGH) carry the 'HIGH' region motif. The 'KMSKS' region motif lies at 619 to 623 (KMSKS). Lys-622 is a binding site for ATP.

Belongs to the class-I aminoacyl-tRNA synthetase family.

The protein resides in the cytoplasm. It carries out the reaction tRNA(Leu) + L-leucine + ATP = L-leucyl-tRNA(Leu) + AMP + diphosphate. The sequence is that of Leucine--tRNA ligase from Edwardsiella ictaluri (strain 93-146).